Reading from the N-terminus, the 214-residue chain is 3-isopropylmalate dehydratase small subunit (214 aa).

Belongs to the LeuD family. LeuD type 1 subfamily. Heterodimer of LeuC and LeuD.

The catalysed reaction is (2R,3S)-3-isopropylmalate = (2S)-2-isopropylmalate. The protein operates within amino-acid biosynthesis; L-leucine biosynthesis; L-leucine from 3-methyl-2-oxobutanoate: step 2/4. Functionally, catalyzes the isomerization between 2-isopropylmalate and 3-isopropylmalate, via the formation of 2-isopropylmaleate. The protein is 3-isopropylmalate dehydratase small subunit of Pseudomonas putida (strain GB-1).